The following is a 368-amino-acid chain: tRNA-specific 2-thiouridylase MnmA (368 aa).

ATP is bound by residues 11-18 and M37; that span reads GMSGGVDS. The tract at residues 97–99 is interaction with target base in tRNA; that stretch reads NPD. C102 functions as the Nucleophile in the catalytic mechanism. C102 and C199 form a disulfide bridge. Residue G127 coordinates ATP. The interval 149-151 is interaction with tRNA; sequence KDQ. Catalysis depends on C199, which acts as the Cysteine persulfide intermediate. Residues 311 to 312 are interaction with tRNA; sequence RY.

Belongs to the MnmA/TRMU family. In terms of assembly, interacts with TusE.

It localises to the cytoplasm. It catalyses the reaction S-sulfanyl-L-cysteinyl-[protein] + uridine(34) in tRNA + AH2 + ATP = 2-thiouridine(34) in tRNA + L-cysteinyl-[protein] + A + AMP + diphosphate + H(+). Functionally, catalyzes the 2-thiolation of uridine at the wobble position (U34) of tRNA(Lys), tRNA(Glu) and tRNA(Gln), leading to the formation of s(2)U34, the first step of tRNA-mnm(5)s(2)U34 synthesis. Sulfur is provided by IscS, via a sulfur-relay system. Binds ATP and its substrate tRNAs. This Escherichia coli (strain SMS-3-5 / SECEC) protein is tRNA-specific 2-thiouridylase MnmA.